The following is a 151-amino-acid chain: MAKRVKVVLTESIATLGRDGDVVEVAPGYARNYLLPFGKASNVTPSILKQIERKRAKEKIAAEKLKQEAIDFKTALTTIGRFTIKKQVGEDGVLFGTVTNGDVAEAIQSATKKDIDRRDITVPDIHNLGSFVAKIKLHQEVSAEVNIEVTS.

Belongs to the bacterial ribosomal protein bL9 family.

Its function is as follows. Binds to the 23S rRNA. The polypeptide is Large ribosomal subunit protein bL9 (Prochlorococcus marinus (strain MIT 9515)).